A 268-amino-acid chain; its full sequence is Undecaprenyl-diphosphatase (268 aa).

The next 7 helical transmembrane spans lie at 5 to 25 (SIISALVLGLIEGLTEFIPVS), 43 to 63 (GNTFAVLIQLGAILAILLVYF), 84 to 104 (LSVLLAFLPAALIGAAAHGFI), 109 to 129 (FETPMLICVVLIVGGIILYVI), 184 to 204 (AAEFSFFLAMPTMVGAFALDL), 213 to 233 (IDDIGLIAAGFIAAFIAGIFV), and 248 to 268 (PFAIWRILVGTAGLVGLWLLG).

It belongs to the UppP family.

Its subcellular location is the cell inner membrane. It catalyses the reaction di-trans,octa-cis-undecaprenyl diphosphate + H2O = di-trans,octa-cis-undecaprenyl phosphate + phosphate + H(+). Its function is as follows. Catalyzes the dephosphorylation of undecaprenyl diphosphate (UPP). Confers resistance to bacitracin. This chain is Undecaprenyl-diphosphatase, found in Sinorhizobium medicae (strain WSM419) (Ensifer medicae).